The chain runs to 165 residues: NADPH-dependent 7-cyano-7-deazaguanine reductase (165 aa).

C56 functions as the Thioimide intermediate in the catalytic mechanism. The active-site Proton donor is D63. Residues 78 to 80 (VES) and 97 to 98 (HE) each bind substrate.

The protein belongs to the GTP cyclohydrolase I family. QueF type 1 subfamily.

It localises to the cytoplasm. The catalysed reaction is 7-aminomethyl-7-carbaguanine + 2 NADP(+) = 7-cyano-7-deazaguanine + 2 NADPH + 3 H(+). It functions in the pathway tRNA modification; tRNA-queuosine biosynthesis. Catalyzes the NADPH-dependent reduction of 7-cyano-7-deazaguanine (preQ0) to 7-aminomethyl-7-deazaguanine (preQ1). This is NADPH-dependent 7-cyano-7-deazaguanine reductase from Bacillus thuringiensis subsp. konkukian (strain 97-27).